The sequence spans 799 residues: Cadherin-8 (799 aa).

The signal sequence occupies residues 1–29 (MPERLAEMLLDLWTPLIILWITLPPCIYM). Positions 30–61 (APMNQSQVLMSGSPLELNSLGEEQRILNRSKR) are excised as a propeptide. 2 N-linked (GlcNAc...) asparagine glycosylation sites follow: Asn33 and Asn57. 5 consecutive Cadherin domains span residues 62–167 (GWVW…APEF), 168–276 (LNGP…PPKF), 277–391 (AQSL…PPVF), 392–494 (SSPT…DNAP), and 495–616 (EFAS…YVLP). The Extracellular segment spans residues 62-621 (GWVWNQMFVL…AYVLPIGLSM (560 aa)). N-linked (GlcNAc...) asparagine glycosylation occurs at Asn188. N-linked (GlcNAc...) asparagine glycosylation is found at Asn463, Asn473, and Asn544. A helical membrane pass occupies residues 622–642 (GALIAILACIILLLVIVVLFV). At 643 to 799 (TLRRHKNEPL…YSVGESDKET (157 aa)) the chain is on the cytoplasmic side. The residue at position 795 (Ser795) is a Phosphoserine.

Mainly expressed in brain. Found in certain nerve cell lines, such as retinoblasts, glioma cells and neuroblasts.

The protein localises to the cell membrane. Cadherins are calcium-dependent cell adhesion proteins. They preferentially interact with themselves in a homophilic manner in connecting cells; cadherins may thus contribute to the sorting of heterogeneous cell types. The chain is Cadherin-8 (CDH8) from Homo sapiens (Human).